The chain runs to 116 residues: Large ribosomal subunit protein bL20c (116 aa).

The protein belongs to the bacterial ribosomal protein bL20 family.

The protein localises to the plastid. The protein resides in the chloroplast. Its function is as follows. Binds directly to 23S ribosomal RNA and is necessary for the in vitro assembly process of the 50S ribosomal subunit. It is not involved in the protein synthesizing functions of that subunit. In Rhodomonas salina (Cryptomonas salina), this protein is Large ribosomal subunit protein bL20c.